The chain runs to 189 residues: Protein CURLY FLAG LEAF 1 (189 aa).

Positions 50 to 55 (TLELNS) match the EAR motif. The WW domain maps to 57 to 91 (LSLPCHWEQCLDLKTGEIYYINWKNGMRVKEDPRK). The segment at 90-148 (RKVMNADPDSGDSYGTVCSEEDSSYYDSEESSSESSPSSRENHKEEEEEEEEEEEEEED) is disordered. Acidic residues-rich tracts occupy residues 108–121 (SEEDSSYYDSEESS) and 135–148 (EEEEEEEEEEEEED).

As to quaternary structure, interacts with BHLH122/CFLAP1 and BHLH80/CFLAP2. Binds to HDG1. Mostly observed in roots, flowers and siliques. Expressed in cells differentiated from epidermal cells such as trichomes, stigmatic papillar cells and guard cells, as well as in tissues undergoing abscission and dehiscence.

In terms of biological role, negatively regulates the cuticle development by interacting with the HD-ZIP IV transcription factor HDG1. The protein is Protein CURLY FLAG LEAF 1 of Arabidopsis thaliana (Mouse-ear cress).